A 422-amino-acid chain; its full sequence is Zinc finger protein Gfi-1 (422 aa).

The interval 1-20 (MPRSFLVKSKKAHSYHQPRS) is SNAG domain. A disordered region spans residues 1 to 109 (MPRSFLVKSK…ASEKSMCPSL (109 aa)). Phosphoserine is present on residues Ser-20 and Ser-56. The required for interaction with RELA stretch occupies residues 140-257 (RPCGALERGA…LLLGGGSYKC (118 aa)). C2H2-type zinc fingers lie at residues 255 to 278 (YKCIKCSKVFSTPHGLEVHVRRSH), 284 to 306 (FACEMCGKTFGHAVSLEQHKAVH), 312 to 334 (FDCKICGKSFKRSSTLSTHLLIH), 340 to 362 (YPCQYCGKRFHQKSDMKKHTFIH), 368 to 390 (HKCQVCGKAFSQSSNLITHSRKH), and 396 to 419 (FGCDLCGKGFQRKVDLRRHRETQH).

In terms of assembly, interacts with U2AF1L4. Component of RCOR-GFI-KDM1A-HDAC complexes. Interacts directly with RCOR1, KDM1A and HDAC2. Also interacts with HDAC1. Interacts (via the zinc-finger domain) with ARIH2; the interaction prevents GFI1 ubiquitination and proteasomal degradation. Interacts with PIAS3; the interaction relieves the inhibitory effect of PIAS3 on STAT3-mediated transcriptional activity. Forms a complex with EHMT2 and HDAC1 to promote 'Lys-9' dimethylation of H3 (H3K9Me2) and repress expression of target genes. Interacts directly with EHMT2. Component of the GFI1-AJUBA-HDAC1 repressor complex. Interacts directly with AJUBA (via ITS LIM domains); the interaction results in the HDAC-dependent corepression of a subset of GFI1 target genes and, occurs independently of the SNAG domain. Interacts with SPI1; the interaction inhibits SPI1 transcriptional activity targeted at macrophage-specific genes, repressing macrophage differentiation of myeloid progenitor cells and promoting granulocyte commitment. Interacts with RUNX1T1; the interaction represses HDAC-mediated transcriptional activity. Interacts with RELA; the interaction occurs on liposaccharide (LPS) stimulation and controls RELA DNA binding activity and regulates endotoxin-mediated TOLL-like receptor inflammatory response. Interacts (via the C-terminal zinc fingers) with ZBTB17; the interaction results in the recruitment of GFI1 to the CDKN1A/p21 and CDKN1B promoters and repression of transcription. Post-translationally, ubiquitinated. Ubiquitination and degradation by the proteasome is inhibited by the ubiquitin ligase, ARIH2.

It localises to the nucleus. In terms of biological role, transcription repressor essential for hematopoiesis. Functions in a cell-context and development-specific manner. Binds to 5'-TAAATCAC[AT]GCA-3' in the promoter region of a large number of genes. Component of several complexes, including the EHMT2-GFI1-HDAC1, AJUBA-GFI1-HDAC1 and RCOR-GFI-KDM1A-HDAC complexes, that suppress, via histone deacetylase (HDAC) recruitment, a number of genes implicated in multilineage blood cell development. Regulates neutrophil differentiation, promotes proliferation of lymphoid cells, and is required for granulocyte development. Inhibits SPI1 transcriptional activity at macrophage-specific genes, repressing macrophage differentiation of myeloid progenitor cells and promoting granulocyte commitment. Mediates, together with U2AF1L4, the alternative splicing of CD45 and controls T-cell receptor signaling. Regulates the endotoxin-mediated Toll-like receptor (TLR) inflammatory response by antagonizing RELA. Cooperates with CBFA2T2 to regulate ITGB1-dependent neurite growth. Controls cell-cycle progression by repressing CDKNIA/p21 transcription in response to TGFB1 via recruitment of GFI1 by ZBTB17 to the CDKNIA/p21 and CDKNIB promoters. Required for the maintenance of inner ear hair cells. In addition to its role in transcription, acts as a substrate adapter for PRMT1 in the DNA damage response: facilitates the recognition of TP53BP1 and MRE11 substrates by PRMT1, promoting their methylation and the DNA damage response. This is Zinc finger protein Gfi-1 (GFI1) from Homo sapiens (Human).